We begin with the raw amino-acid sequence, 566 residues long: Putative ankyrin repeat protein RF_0987 (566 aa).

3 disordered regions span residues 61-118 (KKKN…HENS), 276-314 (PPVM…SAEI), and 355-392 (VNNN…SEST). Residues 78–92 (NQEEPKLASQEHTEA) are compositionally biased toward basic and acidic residues. The span at 101–112 (TGNTALPSVTAS) shows a compositional bias: polar residues. Residues 296-308 (TPVTTPSKVVPTT) show a composition bias toward low complexity. Polar residues predominate over residues 365-378 (EKSPPVSSSNVTIQ). 2 ANK repeats span residues 506–535 (SGET…KIST) and 539–566 (ECQY…KGYQ).

This is Putative ankyrin repeat protein RF_0987 from Rickettsia felis (strain ATCC VR-1525 / URRWXCal2) (Rickettsia azadi).